The following is a 276-amino-acid chain: Diaminopimelate epimerase (276 aa).

The substrate site is built by asparagine 11, glutamine 44, and asparagine 64. The active-site Proton donor is cysteine 73. Residues 74-75 (IN), asparagine 159, asparagine 192, and 210-211 (ER) contribute to the substrate site. Catalysis depends on cysteine 219, which acts as the Proton acceptor. A substrate-binding site is contributed by 220 to 221 (GS).

It belongs to the diaminopimelate epimerase family. Homodimer.

It is found in the cytoplasm. It carries out the reaction (2S,6S)-2,6-diaminopimelate = meso-2,6-diaminopimelate. It participates in amino-acid biosynthesis; L-lysine biosynthesis via DAP pathway; DL-2,6-diaminopimelate from LL-2,6-diaminopimelate: step 1/1. Its function is as follows. Catalyzes the stereoinversion of LL-2,6-diaminopimelate (L,L-DAP) to meso-diaminopimelate (meso-DAP), a precursor of L-lysine and an essential component of the bacterial peptidoglycan. The sequence is that of Diaminopimelate epimerase from Wigglesworthia glossinidia brevipalpis.